The following is a 446-amino-acid chain: N-succinylarginine dihydrolase (446 aa).

Substrate is bound by residues 19 to 28 (AGLSFGNVAS), Asn110, and 137 to 138 (HR). Glu174 is a catalytic residue. Arg213 provides a ligand contact to substrate. Residue His249 is part of the active site. The substrate site is built by Asp251 and Asn364. Cys370 functions as the Nucleophile in the catalytic mechanism.

The protein belongs to the succinylarginine dihydrolase family. In terms of assembly, homodimer.

It catalyses the reaction N(2)-succinyl-L-arginine + 2 H2O + 2 H(+) = N(2)-succinyl-L-ornithine + 2 NH4(+) + CO2. It participates in amino-acid degradation; L-arginine degradation via AST pathway; L-glutamate and succinate from L-arginine: step 2/5. Catalyzes the hydrolysis of N(2)-succinylarginine into N(2)-succinylornithine, ammonia and CO(2). This Burkholderia ambifaria (strain MC40-6) protein is N-succinylarginine dihydrolase.